Reading from the N-terminus, the 241-residue chain is tRNA pseudouridine synthase A (241 aa).

Aspartate 52 acts as the Nucleophile in catalysis. Substrate is bound at residue tyrosine 111.

It belongs to the tRNA pseudouridine synthase TruA family. As to quaternary structure, homodimer.

It catalyses the reaction uridine(38/39/40) in tRNA = pseudouridine(38/39/40) in tRNA. In terms of biological role, formation of pseudouridine at positions 38, 39 and 40 in the anticodon stem and loop of transfer RNAs. The chain is tRNA pseudouridine synthase A from Ureaplasma parvum serovar 3 (strain ATCC 27815 / 27 / NCTC 11736).